A 23-amino-acid polypeptide reads, in one-letter code: Potassium channel toxin kappa-KTx 1.3 (23 aa).

Disulfide bonds link cysteine 4–cysteine 22 and cysteine 8–cysteine 18.

This sequence belongs to the short scorpion toxin superfamily. Potassium channel inhibitor kappa-KTx family. Kappa-KTx 1 subfamily. Monomer. Post-translationally, is not amidated. In terms of tissue distribution, expressed by the venom gland.

It is found in the secreted. Functionally, shows very weak blocking activity on voltage-gated potassium channels Kv10.1/KCNH1/EAG1 (6.2% inhibition by 40 uM of the toxin). Has no effect on the other voltage-gated potassium channels tested. The sequence is that of Potassium channel toxin kappa-KTx 1.3 from Heterometrus spinifer (Asia giant forest scorpion).